The chain runs to 119 residues: MNRNQILQNIEANQIKANLPNIYVGDYVKVGLLIQEGNKERVQPYEGVVIAKHNSASNSTITVRKMFQGIGVERIFLIHSPRITSIEVISNSKVRRAKLYYLRERIGKATRLKQKFSKV.

Belongs to the bacterial ribosomal protein bL19 family.

It is found in the plastid. Its subcellular location is the chloroplast. This Mesostigma viride (Green alga) protein is Large ribosomal subunit protein bL19c.